Consider the following 347-residue polypeptide: N-acetyl-gamma-glutamyl-phosphate reductase (347 aa).

The active site involves cysteine 151.

It belongs to the NAGSA dehydrogenase family. Type 1 subfamily.

The protein localises to the cytoplasm. It catalyses the reaction N-acetyl-L-glutamate 5-semialdehyde + phosphate + NADP(+) = N-acetyl-L-glutamyl 5-phosphate + NADPH + H(+). It participates in amino-acid biosynthesis; L-arginine biosynthesis; N(2)-acetyl-L-ornithine from L-glutamate: step 3/4. In terms of biological role, catalyzes the NADPH-dependent reduction of N-acetyl-5-glutamyl phosphate to yield N-acetyl-L-glutamate 5-semialdehyde. The protein is N-acetyl-gamma-glutamyl-phosphate reductase of Corynebacterium glutamicum (strain R).